Reading from the N-terminus, the 193-residue chain is Secreted RxLR effector protein 126 (193 aa).

The first 20 residues, 1–20 (MRYLLAVLIAAAFVISSGTS), serve as a signal peptide directing secretion. The RxLR-dEER motif lies at 50-64 (RMLQTKAVNGLEEER).

It belongs to the RxLR effector family.

Its subcellular location is the secreted. The protein resides in the host membrane. In terms of biological role, secreted effector that completely suppresses the host cell death induced by cell death-inducing proteins. The protein is Secreted RxLR effector protein 126 of Plasmopara viticola (Downy mildew of grapevine).